A 167-amino-acid polypeptide reads, in one-letter code: Mitochondrial inner membrane protease subunit 1 (167 aa).

Catalysis depends on residues serine 40 and lysine 83.

The protein belongs to the peptidase S26 family. IMP1 subfamily. Heterodimer of 2 subunits, IMMPL1 and IMMPL2.

It is found in the mitochondrion inner membrane. In terms of biological role, catalyzes the removal of transit peptides required for the targeting of proteins from the mitochondrial matrix, across the inner membrane, into the inter-membrane space. The sequence is that of Mitochondrial inner membrane protease subunit 1 (immp1l) from Xenopus tropicalis (Western clawed frog).